A 325-amino-acid polypeptide reads, in one-letter code: Isoaspartyl peptidase/L-asparaginase (325 aa).

Catalysis depends on threonine 193, which acts as the Nucleophile. Substrate is bound by residues 221 to 224 (RIGD) and 243 to 246 (TGKG).

This sequence belongs to the Ntn-hydrolase family. Heterotetramer of two alpha and two beta chains arranged as a dimer of alpha/beta heterodimers. Cleaved into an alpha and beta chain by autocatalysis; this activates the enzyme. The N-terminal residue of the beta subunit is responsible for the nucleophile hydrolase activity. Developing seeds.

The enzyme catalyses Cleavage of a beta-linked Asp residue from the N-terminus of a polypeptide.. Its function is as follows. Acts in asparagine catabolism but also in the final steps of protein degradation via hydrolysis of a range of isoaspartyl dipeptides. The chain is Isoaspartyl peptidase/L-asparaginase from Lupinus angustifolius (Narrow-leaved blue lupine).